Here is a 351-residue protein sequence, read N- to C-terminus: MLKNDLFLRALKRQPCSRTPIWVMRQAGRYLPEYRAVREKTDFLTLCKTPELATEVTIQPVELVGVDAAIIFSDILVVNEAMGQEVNIIETKGIKLAPPIRSQADIDKLIVPDIDEKLGYVLDALRMTKKELDNRVPLIGFSGAAWTLFTYAVEGGGSKNYAYAKQMMYREPQMAHSLLSKISQTITAYTLKQIEAGADAIQIFDSWASALSEDDYREYALPYIKDTVQAIKAKHPETPVIVFSKDCNTILSDIADTGCDAVGLGWGIDISKARTELNDRVALQGNLDPTVLYGTQERIKIEAGKILKSFGQHNHHSGHVFNLGHGILPDMDPDNLRCLVEFVKEESAKYH.

Residues arginine 25–arginine 29, aspartate 74, tyrosine 151, serine 206, and histidine 325 each bind substrate.

This sequence belongs to the uroporphyrinogen decarboxylase family. As to quaternary structure, homodimer.

The protein resides in the cytoplasm. The catalysed reaction is uroporphyrinogen III + 4 H(+) = coproporphyrinogen III + 4 CO2. Its pathway is porphyrin-containing compound metabolism; protoporphyrin-IX biosynthesis; coproporphyrinogen-III from 5-aminolevulinate: step 4/4. Functionally, catalyzes the decarboxylation of four acetate groups of uroporphyrinogen-III to yield coproporphyrinogen-III. In Chlorobium chlorochromatii (strain CaD3), this protein is Uroporphyrinogen decarboxylase.